The chain runs to 508 residues: MGLPWYRVHTVVLNDPGRLLSVHIMHTALVSGWAGSMALYELAVFDPSDPVLDPMWRQGMFVIPFMTRLGINNSWGGWSITGETVTNPGLWSYEGVAGAHIVFSGLCFLAAIWHWVYWDLDIFCDERTGKPSLDLPKIFGIHLFLSGVACFGSGAFHVTGLYGPGIWVSDPYGLTGKIQPVNPAWGAEGFDPFVPGGIASHHIAAGILGILAGLFHLSVRPPQRLYKGLRMGNIETVLSSSIAAVFFAAFIVAGTMWYGSATAPVELFGPTRYQWDQGYFQQEIDRRVRAGLSENLSLSEAWSKIPEKLAFYDYIGNNPAKGGLFRAGAMDNGDGIAVGWLGHPIFRDKEGHELFVRRMPTFFETFPVVLVDEEGIVKADVPFRRAESKYSVEQVGVTVEFYGGELDGVSFGDPATVKKYARRAQLGEIFELDRATLKSDGVFRSSPRGWFTFGHATFALLFFFGHIWHGARTLFRDVFAGIDPDLDAQVEFGAFQXLGDPTTKRQIV.

6 helical membrane passes run 21 to 36 (SVHI…WAGS), 101 to 115 (IVFS…IWHW), 140 to 156 (GIHL…SGAF), 203 to 218 (IAAG…FHLS), 237 to 252 (VLSS…AFIV), and 457 to 472 (TFAL…HGAR).

This sequence belongs to the PsbB/PsbC family. PsbB subfamily. In terms of assembly, PSII is composed of 1 copy each of membrane proteins PsbA, PsbB, PsbC, PsbD, PsbE, PsbF, PsbH, PsbI, PsbJ, PsbK, PsbL, PsbM, PsbT, PsbX, PsbY, PsbZ, Psb30/Ycf12, at least 3 peripheral proteins of the oxygen-evolving complex and a large number of cofactors. It forms dimeric complexes. The cofactor is Binds multiple chlorophylls. PSII binds additional chlorophylls, carotenoids and specific lipids..

It localises to the plastid. Its subcellular location is the chloroplast thylakoid membrane. Its function is as follows. One of the components of the core complex of photosystem II (PSII). It binds chlorophyll and helps catalyze the primary light-induced photochemical processes of PSII. PSII is a light-driven water:plastoquinone oxidoreductase, using light energy to abstract electrons from H(2)O, generating O(2) and a proton gradient subsequently used for ATP formation. The protein is Photosystem II CP47 reaction center protein of Cycas taitungensis (Prince sago).